The primary structure comprises 284 residues: MPASLIDGREISALRRTELKQRVQYHVEQGQRAPGLAVVLIGNDPASVIYVSNKRKACEEVGITSHSYDLPAETTQEKLIELINELNQSDKIDGILIQLPLPKHINERTIIEHIKPEKDVDGFHPYNLGRLAQRNPFLRPCTPLGIMNLLHHYELNVKRKHAVVIGASNIVGRPMSLELLLAGATVTICHKFTQQLQKFVEIADFLIVATGKMDVIATDWLREHQVVIDVGMHRLPDGSIRGDIDFKKAVEKVAWITPVPGGVGPMTIVTLLENTMMSAARLRE.

166–168 (GAS) serves as a coordination point for NADP(+).

Belongs to the tetrahydrofolate dehydrogenase/cyclohydrolase family. Homodimer.

The enzyme catalyses (6R)-5,10-methylene-5,6,7,8-tetrahydrofolate + NADP(+) = (6R)-5,10-methenyltetrahydrofolate + NADPH. It catalyses the reaction (6R)-5,10-methenyltetrahydrofolate + H2O = (6R)-10-formyltetrahydrofolate + H(+). It participates in one-carbon metabolism; tetrahydrofolate interconversion. In terms of biological role, catalyzes the oxidation of 5,10-methylenetetrahydrofolate to 5,10-methenyltetrahydrofolate and then the hydrolysis of 5,10-methenyltetrahydrofolate to 10-formyltetrahydrofolate. The sequence is that of Bifunctional protein FolD from Legionella pneumophila (strain Corby).